The primary structure comprises 670 residues: Probable metal-nicotianamine transporter YSL4 (670 aa).

13 consecutive transmembrane segments (helical) span residues 35–55, 59–79, 107–127, 151–171, 273–293, 318–338, 389–409, 416–436, 450–470, 507–527, 559–579, 601–621, and 636–656; these read ITIR…IITH, LTIG…FFFI, CVVS…LIAM, GLWW…FCLV, LVNC…WPFI, VFIA…KIIV, FAVS…PLIF, FVLC…YGAG, GLFI…GLAA, LGTA…WTAF, PKHC…VNLI, FYIG…MLVW, and VASG…ILSI.

Belongs to the YSL (TC 2.A.67.2) family.

The protein localises to the membrane. Functionally, may be involved in the transport of nicotianamine-chelated metals. This is Probable metal-nicotianamine transporter YSL4 (YSL4) from Arabidopsis thaliana (Mouse-ear cress).